A 512-amino-acid chain; its full sequence is Acid-sensing ion channel 2 (512 aa).

At 1–42 (MDLKESPSEGSLQPSSIQIFANTSTLHGIRHIFVYGPLTIRR) the chain is on the cytoplasmic side. Ser8 and Ser11 each carry phosphoserine. The chain crosses the membrane as a helical span at residues 43-64 (VLWAVAFVGSLGLLLVESSERV). The Extracellular segment spans residues 65 to 424 (SYYFSYQHVT…ETIEQKKAYE (360 aa)). Intrachain disulfides connect Cys92–Cys193, Cys289–Cys364, Cys307–Cys360, Cys311–Cys358, Cys320–Cys342, and Cys322–Cys334. Residues Asn365 and Asn392 are each glycosylated (N-linked (GlcNAc...) asparagine). Residues 425–439 (VAALLGDIGGQMGLF) traverse the membrane as a helical segment. The Cytoplasmic segment spans residues 440–512 (IGASILTILE…TLGTLEEIAC (73 aa)). Residues 441-443 (GAS) carry the GAS motif; ion selectivity filter motif.

It belongs to the amiloride-sensitive sodium channel (TC 1.A.6) family. ASIC2 subfamily. Can form homotrimers. Heterotrimer; forms functional heterotrimers producing channel with different properties. Forms heterotrimers with ASIC1; while ASIC1 determines current amplitude, ASIC2 influences the properties of the current. Forms heterotrimers with ASIC3; resulting in channels with distinct properties. Interacts with STOM; STOM regulates the gating of ASIC2-containing channels. Interacts with PICK1; promotes ASIC3 phosphorylation by PKC and activation of ASIC2/ASIC3 heterotrimers. As to expression, expressed in brain, cerebellum, trigeminal sensory ganglia and also detected in testis.

It localises to the cell membrane. The catalysed reaction is Na(+)(in) = Na(+)(out). The enzyme catalyses K(+)(in) = K(+)(out). It carries out the reaction Li(+)(in) = Li(+)(out). Its activity is regulated as follows. Inhibited by the diuretic drug amiloride. Inhibited by gadolinium ions, the heterotrimer with ASIC3 being more sensitive. Heterotrimer composed of ASIC1 and ASIC2 are inhibited by the snake venom mambalgin-1. Functionally, forms pH-gated trimeric sodium channels that act as postsynaptic excitatory sensors in the nervous system. Upon extracellular acidification, these channels generate rapid, transient inward currents that fully desensitize. Highly selective for sodium, they are permeable to other cations. By forming heterotrimeric channels with ASIC1, could contribute to synaptic plasticity, learning, and memory. Additionally, as acid sensors at nerve terminals, plays a role in mechanosensation and phototransduction. The polypeptide is Acid-sensing ion channel 2 (Homo sapiens (Human)).